Reading from the N-terminus, the 124-residue chain is Small ribosomal subunit protein uS12 (124 aa).

At Asp-89 the chain carries 3-methylthioaspartic acid.

This sequence belongs to the universal ribosomal protein uS12 family. In terms of assembly, part of the 30S ribosomal subunit. Contacts proteins S8 and S17. May interact with IF1 in the 30S initiation complex.

Its function is as follows. With S4 and S5 plays an important role in translational accuracy. Functionally, interacts with and stabilizes bases of the 16S rRNA that are involved in tRNA selection in the A site and with the mRNA backbone. Located at the interface of the 30S and 50S subunits, it traverses the body of the 30S subunit contacting proteins on the other side and probably holding the rRNA structure together. The combined cluster of proteins S8, S12 and S17 appears to hold together the shoulder and platform of the 30S subunit. The polypeptide is Small ribosomal subunit protein uS12 (Blochmanniella pennsylvanica (strain BPEN)).